The sequence spans 400 residues: Enoyl-[acyl-carrier-protein] reductase [NADH] (400 aa).

NAD(+)-binding positions include glycine 48–tyrosine 53, phenylalanine 74–glutamate 75, aspartate 111–alanine 112, and leucine 139–alanine 140. Position 225 (tyrosine 225) interacts with substrate. Tyrosine 235 (proton donor) is an active-site residue. NAD(+) contacts are provided by residues lysine 244 and valine 273 to threonine 275.

It belongs to the TER reductase family. As to quaternary structure, monomer.

The enzyme catalyses a 2,3-saturated acyl-[ACP] + NAD(+) = a (2E)-enoyl-[ACP] + NADH + H(+). Its pathway is lipid metabolism; fatty acid biosynthesis. Involved in the final reduction of the elongation cycle of fatty acid synthesis (FAS II). Catalyzes the reduction of a carbon-carbon double bond in an enoyl moiety that is covalently linked to an acyl carrier protein (ACP). This Shewanella oneidensis (strain ATCC 700550 / JCM 31522 / CIP 106686 / LMG 19005 / NCIMB 14063 / MR-1) protein is Enoyl-[acyl-carrier-protein] reductase [NADH].